Here is a 1260-residue protein sequence, read N- to C-terminus: Paraclostridial mosquitocidal protein 1 (1260 aa).

Histidine 208 contributes to the Zn(2+) binding site. Glutamate 209 functions as the Proton acceptor in the catalytic mechanism. Histidine 212 and glutamate 248 together coordinate Zn(2+). Cysteine 395 and cysteine 406 form a disulfide bridge. A translocation domain (TD) region spans residues asparagine 401 to isoleucine 824. Residues asparagine 825 to aspartate 1065 are HCN. An HCC region spans residues phenylalanine 1066–glutamate 1260.

It belongs to the peptidase M27 family. Zn(2+) serves as cofactor.

It catalyses the reaction Limited hydrolysis of proteins of the neuroexocytosis apparatus, synaptobrevins, SNAP25 or syntaxin. No detected action on small molecule substrates.. With respect to regulation, preincubation with the metalloprotease inhibitor 1,10-phenanthroline before injection into Anopheles or Aedes decreases toxicity. Neurotoxin active against Anopheles but not Aedes mosquitoes upon oral ingestion; expression of the ptox operon (ntnh-orfX1-orfX2-orfX3-pmp1) in B.thuringiensis kills Anopheles but not Aedes mosquito 3rd instar larvae. The ntnh-pmp1 construct is about half as toxic. PMP1 is toxic when injected directly into Anopheles or Aedes mosquito 3rd instar larvae, larvae no longer move, suggesting they are paralyzed. Adult mosquitoes (Anopheles or Aedes) and Drosophila lose the ability to fly in a dose-dependent manner by 24 hours after injection with 100 pg neurotoxin. Not toxic upon injection in mice. Its function is as follows. Neurotoxin that cleaves A.gambiae syntaxin 1a, probably hydrolyzing the '240-Glu-|-His-241' bond. Does not cleave A.gambiae n-synaptobrevin or SNAP-25, nor human syntaxin 1A. In terms of biological role, responsible for host epithelial cell transcytosis, host nerve cell targeting and translocation of PMP1 light chain (LC) into host cytosol. Composed of 3 subdomains; the translocation domain (TD), and N-terminus and C-terminus of the receptor-binding domain (RBD), called HCN and HCC. The sequence is that of Paraclostridial mosquitocidal protein 1 from Paraclostridium bifermentans (Clostridium bifermentans).